Reading from the N-terminus, the 218-residue chain is Small ribosomal subunit protein uS3c (218 aa).

The 72-residue stretch at 47 to 118 (VQKHMRISSG…RLNIAIARVP (72 aa)) folds into the KH type-2 domain.

Belongs to the universal ribosomal protein uS3 family. As to quaternary structure, part of the 30S ribosomal subunit.

It localises to the plastid. The protein localises to the chloroplast. The protein is Small ribosomal subunit protein uS3c (rps3) of Nuphar advena (Common spatterdock).